A 360-amino-acid polypeptide reads, in one-letter code: Photosystem II protein D1 (360 aa).

3 consecutive transmembrane segments (helical) span residues 29 to 46 (YIGW…TATS), 118 to 133 (HFLT…EWEL), and 142 to 156 (WISV…AAAA). Histidine 118 is a binding site for chlorophyll a. Tyrosine 126 is a pheophytin a binding site. [CaMn4O5] cluster is bound by residues aspartate 170 and glutamate 189. Residues 197–218 (FHQLGVAGVFGGSLFSAMHGSL) traverse the membrane as a helical segment. Position 198 (histidine 198) interacts with chlorophyll a. Residues histidine 215 and 264–265 (SF) each bind a quinone. Histidine 215 is a Fe cation binding site. Histidine 272 lines the Fe cation pocket. The helical transmembrane segment at 274–288 (FLGLWPVVGIWLTAL) threads the bilayer. Positions 332, 333, 342, and 344 each coordinate [CaMn4O5] cluster. Residues 345–360 (SGESLPVALTAPAVNG) constitute a propeptide that is removed on maturation.

This sequence belongs to the reaction center PufL/M/PsbA/D family. In terms of assembly, PSII is composed of 1 copy each of membrane proteins PsbA, PsbB, PsbC, PsbD, PsbE, PsbF, PsbH, PsbI, PsbJ, PsbK, PsbL, PsbM, PsbT, PsbX, PsbY, PsbZ, Psb30/Ycf12, at least 3 peripheral proteins of the oxygen-evolving complex and a large number of cofactors. It forms dimeric complexes. The D1/D2 heterodimer binds P680, chlorophylls that are the primary electron donor of PSII, and subsequent electron acceptors. It shares a non-heme iron and each subunit binds pheophytin, quinone, additional chlorophylls, carotenoids and lipids. D1 provides most of the ligands for the Mn4-Ca-O5 cluster of the oxygen-evolving complex (OEC). There is also a Cl(-1) ion associated with D1 and D2, which is required for oxygen evolution. The PSII complex binds additional chlorophylls, carotenoids and specific lipids. is required as a cofactor. In terms of processing, tyr-161 forms a radical intermediate that is referred to as redox-active TyrZ, YZ or Y-Z. Post-translationally, C-terminally processed by CTPA; processing is essential to allow assembly of the oxygen-evolving complex and thus photosynthetic growth.

The protein localises to the plastid. It localises to the chloroplast thylakoid membrane. It catalyses the reaction 2 a plastoquinone + 4 hnu + 2 H2O = 2 a plastoquinol + O2. In terms of biological role, photosystem II (PSII) is a light-driven water:plastoquinone oxidoreductase that uses light energy to abstract electrons from H(2)O, generating O(2) and a proton gradient subsequently used for ATP formation. It consists of a core antenna complex that captures photons, and an electron transfer chain that converts photonic excitation into a charge separation. The D1/D2 (PsbA/PsbD) reaction center heterodimer binds P680, the primary electron donor of PSII as well as several subsequent electron acceptors. This is Photosystem II protein D1 from Porphyra purpurea (Red seaweed).